Here is a 227-residue protein sequence, read N- to C-terminus: UPF0173 metal-dependent hydrolase Tlet_1100 (227 aa).

The protein belongs to the UPF0173 family.

This is UPF0173 metal-dependent hydrolase Tlet_1100 from Pseudothermotoga lettingae (strain ATCC BAA-301 / DSM 14385 / NBRC 107922 / TMO) (Thermotoga lettingae).